Here is a 450-residue protein sequence, read N- to C-terminus: tRNA (guanine-N(7)-)-methyltransferase non-catalytic subunit TRM82 (450 aa).

The segment covering 69-82 (AAKKLKTNEGEAIE) has biased composition (basic and acidic residues). The tract at residues 69–103 (AAKKLKTNEGEAIERPGNQRRVPLPGKDPKVPVPG) is disordered. WD repeat units follow at residues 108-147 (PVYQ…KDNC), 200-241 (GHVS…VIDK), and 245-285 (GHKE…LMSS).

The protein belongs to the WD repeat TRM82 family. As to quaternary structure, forms a heterodimer with the catalytic subunit TRM8.

It is found in the nucleus. The protein operates within tRNA modification; N(7)-methylguanine-tRNA biosynthesis. In terms of biological role, required for the formation of N(7)-methylguanine at position 46 (m7G46) in tRNA. In the complex, it is required to stabilize and induce conformational changes of the catalytic subunit. In Eremothecium gossypii (strain ATCC 10895 / CBS 109.51 / FGSC 9923 / NRRL Y-1056) (Yeast), this protein is tRNA (guanine-N(7)-)-methyltransferase non-catalytic subunit TRM82.